A 233-amino-acid chain; its full sequence is UPF0502 protein YPTS_2082 (233 aa).

The protein belongs to the UPF0502 family.

This Yersinia pseudotuberculosis serotype IB (strain PB1/+) protein is UPF0502 protein YPTS_2082.